A 337-amino-acid polypeptide reads, in one-letter code: Phosphate acyltransferase (337 aa).

This sequence belongs to the PlsX family. Homodimer. Probably interacts with PlsY.

Its subcellular location is the cytoplasm. The catalysed reaction is a fatty acyl-[ACP] + phosphate = an acyl phosphate + holo-[ACP]. The protein operates within lipid metabolism; phospholipid metabolism. Functionally, catalyzes the reversible formation of acyl-phosphate (acyl-PO(4)) from acyl-[acyl-carrier-protein] (acyl-ACP). This enzyme utilizes acyl-ACP as fatty acyl donor, but not acyl-CoA. This is Phosphate acyltransferase from Aquifex aeolicus (strain VF5).